The sequence spans 136 residues: Large ribosomal subunit protein uL16c (136 aa).

This sequence belongs to the universal ribosomal protein uL16 family. In terms of assembly, part of the 50S ribosomal subunit.

Its subcellular location is the plastid. It is found in the chloroplast. The sequence is that of Large ribosomal subunit protein uL16c from Saccharum hybrid (Sugarcane).